The following is a 226-amino-acid chain: Ribose-5-phosphate isomerase A (226 aa).

Substrate is bound by residues 33 to 36, 86 to 89, and 99 to 102; these read TGST, DGAD, and KGGG. Glu108 acts as the Proton acceptor in catalysis. Position 126 (Lys126) interacts with substrate.

Belongs to the ribose 5-phosphate isomerase family. In terms of assembly, homodimer.

It carries out the reaction aldehydo-D-ribose 5-phosphate = D-ribulose 5-phosphate. Its pathway is carbohydrate degradation; pentose phosphate pathway; D-ribose 5-phosphate from D-ribulose 5-phosphate (non-oxidative stage): step 1/1. Its function is as follows. Catalyzes the reversible conversion of ribose-5-phosphate to ribulose 5-phosphate. The sequence is that of Ribose-5-phosphate isomerase A from Bordetella pertussis (strain Tohama I / ATCC BAA-589 / NCTC 13251).